A 229-amino-acid polypeptide reads, in one-letter code: uncharacterized protein (229 aa).

A PilZ domain is found at 102-217; the sequence is RRRTVRVEPD…REKVRRYVFE (116 aa).

To A.aeolicus aq_820 and aq_1211.

This is an uncharacterized protein from Aquifex aeolicus (strain VF5).